Reading from the N-terminus, the 83-residue chain is Kunitz-type serine protease inhibitor nigrescinin-3 (83 aa).

An N-terminal signal peptide occupies residues Met-1–Ser-24. A BPTI/Kunitz inhibitor domain is found at Cys-31 to Cys-81. 2 cysteine pairs are disulfide-bonded: Cys-31-Cys-81 and Cys-40-Cys-64.

Belongs to the venom Kunitz-type family. Expressed by the venom gland.

It localises to the secreted. Functionally, serine protease inhibitor. The sequence is that of Kunitz-type serine protease inhibitor nigrescinin-3 from Cryptophis nigrescens (Eastern small-eyed snake).